We begin with the raw amino-acid sequence, 78 residues long: MKVTDHILVPKHEIVPKEEVEEILKRYNIKIQQLPKIYEDDPVIQEIGAKEGDVVRVIRKSPTAGVSIAYRLVIKRII.

The protein belongs to the archaeal Rpo5/eukaryotic RPB5 RNA polymerase subunit family. As to quaternary structure, part of the RNA polymerase complex.

The protein localises to the cytoplasm. It carries out the reaction RNA(n) + a ribonucleoside 5'-triphosphate = RNA(n+1) + diphosphate. In terms of biological role, DNA-dependent RNA polymerase (RNAP) catalyzes the transcription of DNA into RNA using the four ribonucleoside triphosphates as substrates. The sequence is that of DNA-directed RNA polymerase subunit Rpo5 from Methanocaldococcus jannaschii (strain ATCC 43067 / DSM 2661 / JAL-1 / JCM 10045 / NBRC 100440) (Methanococcus jannaschii).